Reading from the N-terminus, the 77-residue chain is Small ribosomal subunit protein uS17 (77 aa).

Belongs to the universal ribosomal protein uS17 family. As to quaternary structure, part of the 30S ribosomal subunit.

Its function is as follows. One of the primary rRNA binding proteins, it binds specifically to the 5'-end of 16S ribosomal RNA. This Rickettsia conorii (strain ATCC VR-613 / Malish 7) protein is Small ribosomal subunit protein uS17.